A 390-amino-acid polypeptide reads, in one-letter code: Leucine aminopeptidase 1 (390 aa).

A signal peptide spans 1–18 (MKLSTALVLGATATGAWS). Residues 19–90 (YAIPQLEQEV…FPTLDAGSYV (72 aa)) constitute a propeptide that is removed on maturation. Asn-120 carries an N-linked (GlcNAc...) asparagine glycan. Zn(2+) is bound by residues His-190, Asp-209, Glu-248, and Asp-275. A disulfide bridge connects residues Cys-324 and Cys-328. A Zn(2+)-binding site is contributed by His-357.

It belongs to the peptidase M28 family. M28E subfamily. In terms of assembly, monomer. Zn(2+) serves as cofactor.

It localises to the secreted. Extracellular aminopeptidase that allows assimilation of proteinaceous substrates. This is Leucine aminopeptidase 1 (lap1) from Emericella nidulans (strain FGSC A4 / ATCC 38163 / CBS 112.46 / NRRL 194 / M139) (Aspergillus nidulans).